The chain runs to 333 residues: MARHSFFCVDGHTCGNPVRLVAGGGPNLNGSTMMEKRAHFLAEYDWIRTGLMFEPRGHDMMSGSILYPPTRPDCDVAVLFIETSGCLPMCGHGTIGTVTMAIEQGLVTPKTPGKLNLDTPAGLVAIEYEQDGQYVERVRLTNVPAFLYAEGLEVECPDLGPIKVDVAYGGNFYAIVEPQENYTDMDDYSALQLIAWSPVLRQRLNEKYKFQHPELPDINRLSHILWTGKPKHPQAHARNAVFYGDKAIDRSPCGTGTSARMAQLAAKGKLKPCDEFIHESIIGSLFHGRVERAAEVAGRPAIVPSIAGWARMTGYNTIFIDDRDPFAHGFSMA.

Catalysis depends on Cys90, which acts as the Proton acceptor. Substrate contacts are provided by residues 91–92 (GH) and Asp249. Cys253 acts as the Proton donor in catalysis. 254–255 (GT) contributes to the substrate binding site.

The protein belongs to the proline racemase family. In terms of assembly, homodimer.

It carries out the reaction trans-4-hydroxy-L-proline = cis-4-hydroxy-D-proline. Functionally, allows intracellular utilization of 4-hydroxyproline, one of the major constituents of host collagen, by converting 4-hydroxy-L-proline to 4-hydroxy-D-proline, which can be further metabolized by intracellular 4-hydroxy-D-proline oxidases. Strong B-cell mitogen. Plays an important role in the regulation of intra- and extracellular amino acid pools, allowing the bacterium to profit from host precursors and enzymatic pathways. The chain is 4-hydroxyproline epimerase from Brucella abortus (strain S19).